Consider the following 416-residue polypeptide: Glutamyl-tRNA reductase (416 aa).

Substrate contacts are provided by residues 49–52, S105, 110–112, and Q116; these read TCNR and EPQ. The active-site Nucleophile is the C50. 185–190 is an NADP(+) binding site; sequence GAGETI.

This sequence belongs to the glutamyl-tRNA reductase family. Homodimer.

It carries out the reaction (S)-4-amino-5-oxopentanoate + tRNA(Glu) + NADP(+) = L-glutamyl-tRNA(Glu) + NADPH + H(+). It participates in porphyrin-containing compound metabolism; protoporphyrin-IX biosynthesis; 5-aminolevulinate from L-glutamyl-tRNA(Glu): step 1/2. Functionally, catalyzes the NADPH-dependent reduction of glutamyl-tRNA(Glu) to glutamate 1-semialdehyde (GSA). This is Glutamyl-tRNA reductase from Shewanella putrefaciens (strain CN-32 / ATCC BAA-453).